Consider the following 99-residue polypeptide: Large ribosomal subunit protein uL23 (99 aa).

This sequence belongs to the universal ribosomal protein uL23 family. In terms of assembly, part of the 50S ribosomal subunit. Contacts protein L29, and trigger factor when it is bound to the ribosome.

In terms of biological role, one of the early assembly proteins it binds 23S rRNA. One of the proteins that surrounds the polypeptide exit tunnel on the outside of the ribosome. Forms the main docking site for trigger factor binding to the ribosome. This Blochmanniella floridana protein is Large ribosomal subunit protein uL23.